Here is a 121-residue protein sequence, read N- to C-terminus: MYMVQENKNFATAQAKSIRVSSRKLNLVAAFIRNMKVSEALVQLTFSPKRIAKVVKDCLQSAVANAENNLGLDIDRLVITKATVGKALVMKRVMPRAKGRATRINKFFSNLYITVTEKEDN.

The protein belongs to the universal ribosomal protein uL22 family. Part of the 50S ribosomal subunit.

This protein binds specifically to 23S rRNA; its binding is stimulated by other ribosomal proteins, e.g. L4, L17, and L20. It is important during the early stages of 50S assembly. It makes multiple contacts with different domains of the 23S rRNA in the assembled 50S subunit and ribosome. Functionally, the globular domain of the protein is located near the polypeptide exit tunnel on the outside of the subunit, while an extended beta-hairpin is found that lines the wall of the exit tunnel in the center of the 70S ribosome. This is Large ribosomal subunit protein uL22 from Rickettsia massiliae (strain Mtu5).